A 206-amino-acid chain; its full sequence is Holliday junction branch migration complex subunit RuvA (206 aa).

The segment at 1–67 is domain I; it reads MIASIFGKIT…QILEEGFAFN (67 aa). Residues 68–141 form a domain II region; it reads TLEEKEWFSK…YDRDDGGKRI (74 aa). The segment at 141-145 is flexible linker; it reads IKPNT. A domain III region spans residues 146–206; the sequence is AMANDYDEMF…QNNEVTNKTA (61 aa).

This sequence belongs to the RuvA family. As to quaternary structure, homotetramer. Forms an RuvA(8)-RuvB(12)-Holliday junction (HJ) complex. HJ DNA is sandwiched between 2 RuvA tetramers; dsDNA enters through RuvA and exits via RuvB. An RuvB hexamer assembles on each DNA strand where it exits the tetramer. Each RuvB hexamer is contacted by two RuvA subunits (via domain III) on 2 adjacent RuvB subunits; this complex drives branch migration. In the full resolvosome a probable DNA-RuvA(4)-RuvB(12)-RuvC(2) complex forms which resolves the HJ.

It is found in the cytoplasm. In terms of biological role, the RuvA-RuvB-RuvC complex processes Holliday junction (HJ) DNA during genetic recombination and DNA repair, while the RuvA-RuvB complex plays an important role in the rescue of blocked DNA replication forks via replication fork reversal (RFR). RuvA specifically binds to HJ cruciform DNA, conferring on it an open structure. The RuvB hexamer acts as an ATP-dependent pump, pulling dsDNA into and through the RuvAB complex. HJ branch migration allows RuvC to scan DNA until it finds its consensus sequence, where it cleaves and resolves the cruciform DNA. This chain is Holliday junction branch migration complex subunit RuvA, found in Mycoplasma pneumoniae (strain ATCC 29342 / M129 / Subtype 1) (Mycoplasmoides pneumoniae).